Reading from the N-terminus, the 403-residue chain is GTPase Obg (403 aa).

An Obg domain is found at 1-159 (MKFIDESLIR…RDLLLELMLL (159 aa)). Residues 160–333 (ADVGMLGFPN…LCRDIMDFII (174 aa)) enclose the OBG-type G domain. GTP contacts are provided by residues 166-173 (GFPNAGKS), 191-195 (FTTLV), 213-216 (DIPG), 283-286 (NKID), and 314-316 (SAA). Mg(2+) is bound by residues Ser173 and Thr193. The segment at 363–403 (EYQFDDDEDWDDDWTEEDDDEDWDDDWTEEDDEGIEFIYKP) is disordered. A compositionally biased stretch (acidic residues) spans 365–397 (QFDDDEDWDDDWTEEDDDEDWDDDWTEEDDEGI).

Belongs to the TRAFAC class OBG-HflX-like GTPase superfamily. OBG GTPase family. Monomer. Mg(2+) serves as cofactor.

Its subcellular location is the cytoplasm. Its function is as follows. An essential GTPase which binds GTP, GDP and possibly (p)ppGpp with moderate affinity, with high nucleotide exchange rates and a fairly low GTP hydrolysis rate. Plays a role in control of the cell cycle, stress response, ribosome biogenesis and in those bacteria that undergo differentiation, in morphogenesis control. The protein is GTPase Obg of Haemophilus influenzae (strain PittEE).